Reading from the N-terminus, the 497-residue chain is Cytochrome P450 26A1 (497 aa).

A heme-binding site is contributed by Cys-442.

Belongs to the cytochrome P450 family. The cofactor is heme.

The protein localises to the endoplasmic reticulum membrane. The protein resides in the microsome membrane. It catalyses the reaction all-trans-retinoate + reduced [NADPH--hemoprotein reductase] + O2 = all-trans-(4S)-hydroxyretinoate + oxidized [NADPH--hemoprotein reductase] + H2O + H(+). The catalysed reaction is all-trans-(4S)-hydroxyretinoate + reduced [NADPH--hemoprotein reductase] + O2 = all-trans-(4S,16)-dihydroxyretinoate + oxidized [NADPH--hemoprotein reductase] + H2O + H(+). It carries out the reaction all-trans-retinoate + reduced [NADPH--hemoprotein reductase] + O2 = all-trans-18-hydroxyretinoate + oxidized [NADPH--hemoprotein reductase] + H2O + H(+). Functionally, a cytochrome P450 monooxygenase involved in the metabolism of retinoates (RAs), the active metabolites of vitamin A, and critical signaling molecules in animals. RAs exist as at least four different isomers: all-trans-RA (atRA), 9-cis-RA, 13-cis-RA, and 9,13-dicis-RA, where atRA is considered to be the biologically active isomer, although 9-cis-RA and 13-cis-RA also have activity. Catalyzes the hydroxylation of atRA primarily at C-4 and C-18, thereby contributing to the regulation of atRA homeostasis and signaling. Hydroxylation of atRA limits its biological activity and initiates a degradative process leading to its eventual elimination. Involved in the convertion of atRA to all-trans-4-oxo-RA. Able to metabolize other RAs such as 9-cis, 13-cis and 9,13-di-cis RA. Can oxidize all-trans-13,14-dihydroretinoate (DRA) to metabolites which could include all-trans-4-oxo-DRA, all-trans-4-hydroxy-DRA, all-trans-5,8-epoxy-DRA, and all-trans-18-hydroxy-DRA. May play a role in the oxidative metabolism of xenobiotics such as tazarotenic acid. The sequence is that of Cytochrome P450 26A1 from Mus musculus (Mouse).